Here is a 240-residue protein sequence, read N- to C-terminus: Lactate utilization protein C (240 aa).

The protein belongs to the LutC/YkgG family.

In terms of biological role, is involved in L-lactate degradation and allows cells to grow with lactate as the sole carbon source. The chain is Lactate utilization protein C from Bacillus pumilus (strain SAFR-032).